The chain runs to 577 residues: Arginine--tRNA ligase (577 aa).

The 'HIGH' region motif lies at 122-132; that stretch reads PNVAKEMHVGH.

It belongs to the class-I aminoacyl-tRNA synthetase family. In terms of assembly, monomer.

It is found in the cytoplasm. It catalyses the reaction tRNA(Arg) + L-arginine + ATP = L-arginyl-tRNA(Arg) + AMP + diphosphate. This Salmonella gallinarum (strain 287/91 / NCTC 13346) protein is Arginine--tRNA ligase.